Consider the following 559-residue polypeptide: 2-succinyl-5-enolpyruvyl-6-hydroxy-3-cyclohexene-1-carboxylate synthase (559 aa).

Belongs to the TPP enzyme family. MenD subfamily. In terms of assembly, homodimer. It depends on Mg(2+) as a cofactor. Mn(2+) is required as a cofactor. Thiamine diphosphate serves as cofactor.

The catalysed reaction is isochorismate + 2-oxoglutarate + H(+) = 5-enolpyruvoyl-6-hydroxy-2-succinyl-cyclohex-3-ene-1-carboxylate + CO2. It functions in the pathway quinol/quinone metabolism; 1,4-dihydroxy-2-naphthoate biosynthesis; 1,4-dihydroxy-2-naphthoate from chorismate: step 2/7. It participates in quinol/quinone metabolism; menaquinone biosynthesis. Catalyzes the thiamine diphosphate-dependent decarboxylation of 2-oxoglutarate and the subsequent addition of the resulting succinic semialdehyde-thiamine pyrophosphate anion to isochorismate to yield 2-succinyl-5-enolpyruvyl-6-hydroxy-3-cyclohexene-1-carboxylate (SEPHCHC). In Edwardsiella ictaluri (strain 93-146), this protein is 2-succinyl-5-enolpyruvyl-6-hydroxy-3-cyclohexene-1-carboxylate synthase.